The chain runs to 287 residues: 2-dehydro-3-deoxyphosphooctonate aldolase (287 aa).

This sequence belongs to the KdsA family.

Its subcellular location is the cytoplasm. The catalysed reaction is D-arabinose 5-phosphate + phosphoenolpyruvate + H2O = 3-deoxy-alpha-D-manno-2-octulosonate-8-phosphate + phosphate. The protein operates within carbohydrate biosynthesis; 3-deoxy-D-manno-octulosonate biosynthesis; 3-deoxy-D-manno-octulosonate from D-ribulose 5-phosphate: step 2/3. Its pathway is bacterial outer membrane biogenesis; lipopolysaccharide biosynthesis. This is 2-dehydro-3-deoxyphosphooctonate aldolase from Bradyrhizobium sp. (strain ORS 278).